A 123-amino-acid polypeptide reads, in one-letter code: Small ribosomal subunit protein uS12 (123 aa).

A 3-methylthioaspartic acid modification is found at Asp-90.

It belongs to the universal ribosomal protein uS12 family. Part of the 30S ribosomal subunit. Contacts proteins S8 and S17. May interact with IF1 in the 30S initiation complex.

With S4 and S5 plays an important role in translational accuracy. Its function is as follows. Interacts with and stabilizes bases of the 16S rRNA that are involved in tRNA selection in the A site and with the mRNA backbone. Located at the interface of the 30S and 50S subunits, it traverses the body of the 30S subunit contacting proteins on the other side and probably holding the rRNA structure together. The combined cluster of proteins S8, S12 and S17 appears to hold together the shoulder and platform of the 30S subunit. The chain is Small ribosomal subunit protein uS12 from Ehrlichia ruminantium (strain Gardel).